Consider the following 94-residue polypeptide: DNA-binding protein HU (94 aa).

The protein belongs to the bacterial histone-like protein family. In terms of assembly, homodimer.

Functionally, histone-like DNA-binding protein which is capable of wrapping DNA to stabilize it, and thus to prevent its denaturation under extreme environmental conditions. This is DNA-binding protein HU (hup) from Helicobacter pylori (strain J99 / ATCC 700824) (Campylobacter pylori J99).